The chain runs to 648 residues: MEGKVIEVQSAWREGAHVDDAKYREMYAASVADPDAFWAEHGKRIDWMKPFSTVKNTSFEPGKVSIKWFEDGTTNVAHNCIDRHLETRGDQTAIIWEGDNPDEAKHISYRELHAQVCRMANVLRNRGVGKGDRVTLYMPMIPEAAYAMLACARLGAIHAIVFGGFSPDSLASRIQGCGSKVVITADEGLRGGRKVPLKANVDEAIKRLDADLVDHVIVVRRTGGSVAMEAGRDVYYDEAAEQVTDECPAVAVDAEHPLFILYTSGSTGQPKGVVHTTGGYLVYASMTHEYVFDYREGDVYWCTADVGWVTGHSYIVYGPLANGATTLMFEGIPTYPSTSRFWEVVDKHKVNIFYTAPTAIRSLMGGGEGPVKKTSRQSLRVLGSVGEPINPEAWEWYYNVVGDRRCSIVDTWWQTETGGILITPLPGATALKPGSATRPFFGVKPQMVDAEGKVLEGPCEGNLCIADSWPGQMRTVYGDHERFEQTYFSTYPGKYFTGDGARRDADGYYWITGRVDDVINVSGHRMGTAEVESSLVAHPKVAEAAVVGYPHNVKGQGIYAYVTLNDGEEGDDALRKELVTWVRKDIGPIASPDLIQFAPGLPKTRSGKIMRRILRKIAEDDFSSLGDTSTLAEPAVVDDLIENRQNRG.

Residues 190 to 193 (RGGR) and threonine 310 each bind CoA. Residues 386–388 (GEP), 410–415 (DTWWQT), aspartate 499, and arginine 514 contribute to the ATP site. Serine 522 contributes to the CoA binding site. Arginine 525 contacts ATP. Residues valine 536, histidine 538, and valine 541 each contribute to the Mg(2+) site. Position 583 (arginine 583) interacts with CoA. Position 608 is an N6-acetyllysine (lysine 608).

It belongs to the ATP-dependent AMP-binding enzyme family. Mg(2+) serves as cofactor. Acetylated. Deacetylation by the SIR2-homolog deacetylase activates the enzyme.

The catalysed reaction is acetate + ATP + CoA = acetyl-CoA + AMP + diphosphate. Its function is as follows. Catalyzes the conversion of acetate into acetyl-CoA (AcCoA), an essential intermediate at the junction of anabolic and catabolic pathways. AcsA undergoes a two-step reaction. In the first half reaction, AcsA combines acetate with ATP to form acetyl-adenylate (AcAMP) intermediate. In the second half reaction, it can then transfer the acetyl group from AcAMP to the sulfhydryl group of CoA, forming the product AcCoA. The polypeptide is Acetyl-coenzyme A synthetase (Methylobacterium radiotolerans (strain ATCC 27329 / DSM 1819 / JCM 2831 / NBRC 15690 / NCIMB 10815 / 0-1)).